We begin with the raw amino-acid sequence, 870 residues long: Aldehyde-alcohol dehydrogenase 2 (870 aa).

Cys-252 is a catalytic residue. 431–436 (GCGSYG) is a binding site for NAD(+).

The protein in the N-terminal section; belongs to the aldehyde dehydrogenase family. This sequence in the C-terminal section; belongs to the iron-containing alcohol dehydrogenase family. In terms of assembly, seems to form a rod shaped homomer composed of at least 20 identical subunits. Zn(2+) serves as cofactor. The cofactor is Fe(2+).

It catalyses the reaction a primary alcohol + NAD(+) = an aldehyde + NADH + H(+). It carries out the reaction a secondary alcohol + NAD(+) = a ketone + NADH + H(+). The enzyme catalyses acetaldehyde + NAD(+) + CoA = acetyl-CoA + NADH + H(+). In terms of biological role, this enzyme has two NAD(+)-dependent activities: ADH and ACDH. May be a critical enzyme in the fermentative pathway. In Entamoeba histolytica (strain ATCC 30459 / HM-1:IMSS / ABRM), this protein is Aldehyde-alcohol dehydrogenase 2 (ADH2).